The primary structure comprises 112 residues: Tyrosine-protein phosphatase 17 (112 aa).

One can recognise a Tyrosine-protein phosphatase domain in the interval 1–112; the sequence is WRMIWEHECC…QPHTAGPIVV (112 aa). Asp-82 contacts substrate.

The protein belongs to the protein-tyrosine phosphatase family.

The catalysed reaction is O-phospho-L-tyrosyl-[protein] + H2O = L-tyrosyl-[protein] + phosphate. This Styela plicata (Wrinkled sea squirt) protein is Tyrosine-protein phosphatase 17 (STY-17).